Here is a 204-residue protein sequence, read N- to C-terminus: Cytochrome c biogenesis ATP-binding export protein CcmA (204 aa).

Residues 3–204 form the ABC transporter domain; that stretch reads LTVTDLAIAR…PLDDPDGDFL (202 aa). 35–42 lines the ATP pocket; sequence GPNGAGKT.

Belongs to the ABC transporter superfamily. CcmA exporter (TC 3.A.1.107) family. As to quaternary structure, the complex is composed of two ATP-binding proteins (CcmA) and two transmembrane proteins (CcmB).

The protein resides in the cell membrane. It carries out the reaction heme b(in) + ATP + H2O = heme b(out) + ADP + phosphate + H(+). Part of the ABC transporter complex CcmAB involved in the biogenesis of c-type cytochromes; once thought to export heme, this seems not to be the case, but its exact role is uncertain. Responsible for energy coupling to the transport system. The polypeptide is Cytochrome c biogenesis ATP-binding export protein CcmA (Ruegeria pomeroyi (strain ATCC 700808 / DSM 15171 / DSS-3) (Silicibacter pomeroyi)).